A 449-amino-acid chain; its full sequence is Bifunctional protein GlmU (449 aa).

Positions 1–228 (MSTALVILAA…EAETLGINSR (228 aa)) are pyrophosphorylase. Residues 8 to 11 (LAAG), Lys22, Gln75, 80 to 81 (GT), 103 to 105 (YGD), Gly140, Glu154, Asn169, and Asn226 contribute to the UDP-N-acetyl-alpha-D-glucosamine site. Position 105 (Asp105) interacts with Mg(2+). Asn226 is a Mg(2+) binding site. The interval 229 to 249 (ADLAAAEAVFQAHARAELLDI) is linker. Residues 250–449 (GVTLTAPETV…RAKKAAKAKG (200 aa)) are N-acetyltransferase. UDP-N-acetyl-alpha-D-glucosamine is bound by residues Arg315 and Lys333. His345 (proton acceptor) is an active-site residue. UDP-N-acetyl-alpha-D-glucosamine is bound by residues Tyr348 and Asn359. Residues Ala362, 368-369 (NY), Ser387, Thr405, and Arg422 contribute to the acetyl-CoA site.

The protein in the N-terminal section; belongs to the N-acetylglucosamine-1-phosphate uridyltransferase family. This sequence in the C-terminal section; belongs to the transferase hexapeptide repeat family. In terms of assembly, homotrimer. It depends on Mg(2+) as a cofactor.

The protein localises to the cytoplasm. The catalysed reaction is alpha-D-glucosamine 1-phosphate + acetyl-CoA = N-acetyl-alpha-D-glucosamine 1-phosphate + CoA + H(+). The enzyme catalyses N-acetyl-alpha-D-glucosamine 1-phosphate + UTP + H(+) = UDP-N-acetyl-alpha-D-glucosamine + diphosphate. Its pathway is nucleotide-sugar biosynthesis; UDP-N-acetyl-alpha-D-glucosamine biosynthesis; N-acetyl-alpha-D-glucosamine 1-phosphate from alpha-D-glucosamine 6-phosphate (route II): step 2/2. It participates in nucleotide-sugar biosynthesis; UDP-N-acetyl-alpha-D-glucosamine biosynthesis; UDP-N-acetyl-alpha-D-glucosamine from N-acetyl-alpha-D-glucosamine 1-phosphate: step 1/1. The protein operates within bacterial outer membrane biogenesis; LPS lipid A biosynthesis. Functionally, catalyzes the last two sequential reactions in the de novo biosynthetic pathway for UDP-N-acetylglucosamine (UDP-GlcNAc). The C-terminal domain catalyzes the transfer of acetyl group from acetyl coenzyme A to glucosamine-1-phosphate (GlcN-1-P) to produce N-acetylglucosamine-1-phosphate (GlcNAc-1-P), which is converted into UDP-GlcNAc by the transfer of uridine 5-monophosphate (from uridine 5-triphosphate), a reaction catalyzed by the N-terminal domain. The sequence is that of Bifunctional protein GlmU from Ruegeria sp. (strain TM1040) (Silicibacter sp.).